The sequence spans 638 residues: MAKTNLSVDAADLTSRITRTPFPGSRKIYIEGSRPDIRVPFREVTLTDTLVAEGSETRREANPPLRLFDSSGVYTDPAASIDITRGLSPLRGAWINERQDTEALPGISSAYGRERLNDPALSALRMAHAPVPRRAKAGANVSQMHYARQGIITPEMEYIAIRENLVRAQLAERLATERVPKTGHSFGASIPKDITAEFVRDEVARGRAVIPNNINHPETEPMIIGRNFLIKVNANIGNSAVTSSIEEEVDKLAWSIRWGADTVMDLSTGENIHETREWILRNSPVPIGTVPIYQALEKVNGKAEDLTWEIFRDTLIEQAEQGVDYFTIHAGVRLAYVPLTANRLTGIVSRGGSIMAKWCLSHHKESFLYEHFEEICEIMKAYDVCFSLGDGLRPGSIADANDEAQFAELHTLGELTQIAWKHDVQVMIEGPGHVPLQLVKENVEKQLEACFEAPFYTLGPLITDISPGYDHISSAMGAANIGWYGTAMLCYVTPKEHLGLPNRDDVKQGLIAYKIAAHAGDLAKGYPGAQMWDNAVSKARFEFRWEDQFRLAIDPDTAMAYHDETLPKENAKVAHFCSMCGPKFCSMKISQEVREFARLNPSTTTLAKAPGVIPIQQVSSGFEEKAEEFRKGGNEIYS.

Substrate contacts are provided by residues Asn235, Met264, Tyr293, His329, 349–351 (SRG), 390–393 (DGLR), and Glu429. Residue His433 coordinates Zn(2+). Tyr456 lines the substrate pocket. Zn(2+) is bound at residue His497. Cys577, Cys580, and Cys585 together coordinate [4Fe-4S] cluster.

It belongs to the ThiC family. In terms of assembly, homodimer. The cofactor is [4Fe-4S] cluster.

It carries out the reaction 5-amino-1-(5-phospho-beta-D-ribosyl)imidazole + S-adenosyl-L-methionine = 4-amino-2-methyl-5-(phosphooxymethyl)pyrimidine + CO + 5'-deoxyadenosine + formate + L-methionine + 3 H(+). It functions in the pathway cofactor biosynthesis; thiamine diphosphate biosynthesis. Functionally, catalyzes the synthesis of the hydroxymethylpyrimidine phosphate (HMP-P) moiety of thiamine from aminoimidazole ribotide (AIR) in a radical S-adenosyl-L-methionine (SAM)-dependent reaction. The polypeptide is Phosphomethylpyrimidine synthase (Polaromonas naphthalenivorans (strain CJ2)).